A 289-amino-acid polypeptide reads, in one-letter code: Thioredoxin-like protein 1 (289 aa).

Residues 2–109 (VGVKPVGSDP…EEKIKQHLEN (108 aa)) enclose the Thioredoxin domain. Cysteine 34 and cysteine 37 form a disulfide bridge. Serine 113 is subject to Phosphoserine. A PITH domain is found at 115–285 (EDTDIPKGYM…NDFKRVVGKK (171 aa)).

As to quaternary structure, component of the 19S regulatory cap of the 26S proteasome. Interacts with PSMD14/RPN11. Interacts with, and reduces EEF1A1.

It is found in the cytoplasm. It localises to the nucleus. Functionally, active thioredoxin with a redox potential of about -250 mV. This Rattus norvegicus (Rat) protein is Thioredoxin-like protein 1 (Txnl1).